The sequence spans 476 residues: Adenosylhomocysteinase (476 aa).

Substrate-binding residues include threonine 67, aspartate 142, and glutamate 202. 203 to 205 lines the NAD(+) pocket; the sequence is TTT. Substrate contacts are provided by lysine 232 and aspartate 236. NAD(+) contacts are provided by residues asparagine 237, 266 to 271, glutamate 289, asparagine 324, 345 to 347, and asparagine 390; these read GYGDVG and IGH.

This sequence belongs to the adenosylhomocysteinase family. It depends on NAD(+) as a cofactor.

The protein resides in the cytoplasm. It catalyses the reaction S-adenosyl-L-homocysteine + H2O = L-homocysteine + adenosine. It participates in amino-acid biosynthesis; L-homocysteine biosynthesis; L-homocysteine from S-adenosyl-L-homocysteine: step 1/1. Functionally, may play a key role in the regulation of the intracellular concentration of adenosylhomocysteine. This is Adenosylhomocysteinase from Prochlorococcus marinus (strain MIT 9211).